The chain runs to 175 residues: Alpha-crystallin B chain (175 aa).

An N-acetylmethionine modification is found at methionine 1. A Phosphoserine modification is found at serine 19. A glycan (O-linked (GlcNAc) serine) is linked at serine 41. Serine 45 and serine 59 each carry phosphoserine. Residues 56–164 (RAPSWIDTGL…PERTIPITRE (109 aa)) enclose the sHSP domain. Histidine 83 contacts Zn(2+). Lysine 92 is modified (N6-acetyllysine). Histidine 104, glutamate 106, histidine 111, and histidine 119 together coordinate Zn(2+). The segment at 139–175 (SDGVLTMNGPRKQASGPERTIPITREEKPAVTAAPKK) is disordered. Lysine 166 is modified (N6-acetyllysine). O-linked (GlcNAc) threonine glycosylation occurs at threonine 170.

This sequence belongs to the small heat shock protein (HSP20) family. In terms of assembly, heteromer composed of three CRYAA and one CRYAB subunits. Aggregates with homologous proteins, including the small heat shock protein HSPB1, to form large heteromeric complexes. Inter-subunit bridging via zinc ions enhances stability, which is crucial as there is no protein turn over in the lens. Interacts with HSPBAP1 and TTN/titin. Interacts with TMEM109; in the cellular response to DNA damage. Interacts with DES; binds rapidly during early stages of DES filament assembly and a reduced binding seen in the later stages. Interacts with ATP6V1A and with MTOR, forming a ternary complex.

The protein resides in the cytoplasm. It is found in the nucleus. It localises to the secreted. Its subcellular location is the lysosome. May contribute to the transparency and refractive index of the lens. Has chaperone-like activity, preventing aggregation of various proteins under a wide range of stress conditions. In lens epithelial cells, stabilizes the ATP6V1A protein, preventing its degradation by the proteasome. The sequence is that of Alpha-crystallin B chain (CRYAB) from Ovis aries (Sheep).